Consider the following 467-residue polypeptide: Dihydroorotase (467 aa).

Zn(2+)-binding residues include His-60 and His-62. Substrate contacts are provided by residues 62 to 64 and Asn-94; that span reads HFR. Residues Glu-146, His-180, His-234, and Asp-313 each contribute to the Zn(2+) site. The active site involves Asp-313. His-317 provides a ligand contact to substrate. The disordered stretch occupies residues 439–467; sequence KPGRGEFLEGSGKRSEEDEEENSEETGSD. Residues 441-454 are compositionally biased toward basic and acidic residues; that stretch reads GRGEFLEGSGKRSE. Positions 455 to 467 are enriched in acidic residues; sequence EDEEENSEETGSD.

It belongs to the metallo-dependent hydrolases superfamily. DHOase family. Class I DHOase subfamily. Zn(2+) is required as a cofactor.

It catalyses the reaction (S)-dihydroorotate + H2O = N-carbamoyl-L-aspartate + H(+). The protein operates within pyrimidine metabolism; UMP biosynthesis via de novo pathway; (S)-dihydroorotate from bicarbonate: step 3/3. In terms of biological role, catalyzes the reversible cyclization of carbamoyl aspartate to dihydroorotate. The polypeptide is Dihydroorotase (Methanosarcina acetivorans (strain ATCC 35395 / DSM 2834 / JCM 12185 / C2A)).